The primary structure comprises 191 residues: Ribonuclease HII (191 aa).

Positions 7–191 (ILMAGVDEVG…YSPVADLISK (185 aa)) constitute an RNase H type-2 domain. A divalent metal cation contacts are provided by aspartate 13, glutamate 14, and aspartate 103.

It belongs to the RNase HII family. Mn(2+) is required as a cofactor. The cofactor is Mg(2+).

Its subcellular location is the cytoplasm. The enzyme catalyses Endonucleolytic cleavage to 5'-phosphomonoester.. Functionally, endonuclease that specifically degrades the RNA of RNA-DNA hybrids. This Legionella pneumophila (strain Corby) protein is Ribonuclease HII.